The sequence spans 459 residues: Glutamyl-tRNA reductase (459 aa).

Substrate is bound by residues 49 to 52 (TCNR), serine 109, 114 to 116 (ETQ), and glutamine 120. Cysteine 50 serves as the catalytic Nucleophile. 189-194 (GAGKMG) provides a ligand contact to NADP(+).

It belongs to the glutamyl-tRNA reductase family. Homodimer.

It carries out the reaction (S)-4-amino-5-oxopentanoate + tRNA(Glu) + NADP(+) = L-glutamyl-tRNA(Glu) + NADPH + H(+). It functions in the pathway porphyrin-containing compound metabolism; protoporphyrin-IX biosynthesis; 5-aminolevulinate from L-glutamyl-tRNA(Glu): step 1/2. Functionally, catalyzes the NADPH-dependent reduction of glutamyl-tRNA(Glu) to glutamate 1-semialdehyde (GSA). In Halalkalibacterium halodurans (strain ATCC BAA-125 / DSM 18197 / FERM 7344 / JCM 9153 / C-125) (Bacillus halodurans), this protein is Glutamyl-tRNA reductase.